A 126-amino-acid chain; its full sequence is Putative 15 kDa capsid protein (126 aa).

The protein localises to the virion. In Bombyx mori nuclear polyhedrosis virus (BmNPV), this protein is Putative 15 kDa capsid protein (P15).